The sequence spans 361 residues: Phosphoserine aminotransferase (361 aa).

Position 43 (Arg-43) interacts with L-glutamate. Pyridoxal 5'-phosphate contacts are provided by residues 77–78, Trp-103, Thr-153, Asp-173, and Gln-196; that span reads AS. Residue Lys-197 is modified to N6-(pyridoxal phosphate)lysine. 238–239 contacts pyridoxal 5'-phosphate; sequence NT.

It belongs to the class-V pyridoxal-phosphate-dependent aminotransferase family. SerC subfamily. Homodimer. Pyridoxal 5'-phosphate serves as cofactor.

The protein resides in the cytoplasm. The catalysed reaction is O-phospho-L-serine + 2-oxoglutarate = 3-phosphooxypyruvate + L-glutamate. It carries out the reaction 4-(phosphooxy)-L-threonine + 2-oxoglutarate = (R)-3-hydroxy-2-oxo-4-phosphooxybutanoate + L-glutamate. It functions in the pathway amino-acid biosynthesis; L-serine biosynthesis; L-serine from 3-phospho-D-glycerate: step 2/3. The protein operates within cofactor biosynthesis; pyridoxine 5'-phosphate biosynthesis; pyridoxine 5'-phosphate from D-erythrose 4-phosphate: step 3/5. Its function is as follows. Catalyzes the reversible conversion of 3-phosphohydroxypyruvate to phosphoserine and of 3-hydroxy-2-oxo-4-phosphonooxybutanoate to phosphohydroxythreonine. The polypeptide is Phosphoserine aminotransferase (Pseudomonas syringae pv. tomato (strain ATCC BAA-871 / DC3000)).